The following is a 185-amino-acid chain: Ribosome-recycling factor (185 aa).

This sequence belongs to the RRF family.

The protein resides in the cytoplasm. Functionally, responsible for the release of ribosomes from messenger RNA at the termination of protein biosynthesis. May increase the efficiency of translation by recycling ribosomes from one round of translation to another. The protein is Ribosome-recycling factor of Streptococcus gordonii (strain Challis / ATCC 35105 / BCRC 15272 / CH1 / DL1 / V288).